We begin with the raw amino-acid sequence, 171 residues long: Transcription elongation factor GreB (171 aa).

Residues 53-75 are a coiled coil; that stretch reads KKRLREIDRRVRFLAKRLEVLKI.

It belongs to the GreA/GreB family. GreB subfamily.

Necessary for efficient RNA polymerase transcription elongation past template-encoded arresting sites. The arresting sites in DNA have the property of trapping a certain fraction of elongating RNA polymerases that pass through, resulting in locked ternary complexes. Cleavage of the nascent transcript by cleavage factors such as GreA or GreB allows the resumption of elongation from the new 3'terminus. GreB releases sequences of up to 9 nucleotides in length. The polypeptide is Transcription elongation factor GreB (Yersinia pestis).